The following is a 327-amino-acid chain: Nocardicin C-9' epimerase (327 aa).

Position 43 is an N6-(pyridoxal phosphate)lysine (lysine 43).

It belongs to the ACC deaminase/D-cysteine desulfhydrase family. Pyridoxal 5'-phosphate is required as a cofactor.

It catalyses the reaction isonocardicin C = nocardicin C. The enzyme catalyses isonocardicin A = nocardicin A. The protein operates within antibiotic biosynthesis. Involved in the biosynthesis of the beta-lactam antibiotic nocardicin A. Catalyzes the interconversion of the nocardicin homoseryl side chain in both nocardicin A with isonocardicin A, and nocardicin C with isonocardicin C. The protein is Nocardicin C-9' epimerase of Nocardia uniformis subsp. tsuyamanensis.